The sequence spans 1396 residues: DNA-directed RNA polymerase subunit beta' (1396 aa).

Positions 72, 74, 87, and 90 each coordinate Zn(2+). Mg(2+) contacts are provided by D463, D465, and D467. Zn(2+) contacts are provided by C814, C889, C896, and C899.

This sequence belongs to the RNA polymerase beta' chain family. The RNAP catalytic core consists of 2 alpha, 1 beta, 1 beta' and 1 omega subunit. When a sigma factor is associated with the core the holoenzyme is formed, which can initiate transcription. It depends on Mg(2+) as a cofactor. Requires Zn(2+) as cofactor.

It carries out the reaction RNA(n) + a ribonucleoside 5'-triphosphate = RNA(n+1) + diphosphate. DNA-dependent RNA polymerase catalyzes the transcription of DNA into RNA using the four ribonucleoside triphosphates as substrates. In Chlamydia trachomatis serovar L2 (strain ATCC VR-902B / DSM 19102 / 434/Bu), this protein is DNA-directed RNA polymerase subunit beta'.